We begin with the raw amino-acid sequence, 293 residues long: Ribosomal protein L11 methyltransferase (293 aa).

4 residues coordinate S-adenosyl-L-methionine: Thr-145, Gly-166, Asp-188, and Asn-230.

The protein belongs to the methyltransferase superfamily. PrmA family.

Its subcellular location is the cytoplasm. The enzyme catalyses L-lysyl-[protein] + 3 S-adenosyl-L-methionine = N(6),N(6),N(6)-trimethyl-L-lysyl-[protein] + 3 S-adenosyl-L-homocysteine + 3 H(+). Its function is as follows. Methylates ribosomal protein L11. This Actinobacillus succinogenes (strain ATCC 55618 / DSM 22257 / CCUG 43843 / 130Z) protein is Ribosomal protein L11 methyltransferase.